The sequence spans 441 residues: Xaa-Pro dipeptidase (441 aa).

5 residues coordinate Mn(2+): Asp-244, Asp-255, His-336, Glu-381, and Glu-420.

Belongs to the peptidase M24B family. Bacterial-type prolidase subfamily. The cofactor is Mn(2+).

It catalyses the reaction Xaa-L-Pro dipeptide + H2O = an L-alpha-amino acid + L-proline. Functionally, splits dipeptides with a prolyl residue in the C-terminal position. This is Xaa-Pro dipeptidase from Xanthomonas oryzae pv. oryzae (strain MAFF 311018).